The chain runs to 237 residues: uncharacterized protein (237 aa).

Positions 1 to 28 (MVFSFSTFNRLVTFTVMAAIVSVRPLTA) are cleaved as a signal peptide.

This is an uncharacterized protein from Sinorhizobium fredii (strain NBRC 101917 / NGR234).